The chain runs to 110 residues: Cell division protein FtsB (110 aa).

The Cytoplasmic segment spans residues 1–3; it reads MRL. Residues 4 to 21 form a helical membrane-spanning segment; the sequence is IILCLAALVLLIQFPLWL. At 22 to 110 the chain is on the periplasmic side; it reads GKGGWLRVWD…PPKIEPKEKR (89 aa). A coiled-coil region spans residues 31–64; the sequence is DLDQQVIAAQKKNDELRARNAKLNSEVQDLKEGT.

The protein belongs to the FtsB family. In terms of assembly, part of a complex composed of FtsB, FtsL and FtsQ.

The protein localises to the cell inner membrane. Functionally, essential cell division protein. May link together the upstream cell division proteins, which are predominantly cytoplasmic, with the downstream cell division proteins, which are predominantly periplasmic. In Herminiimonas arsenicoxydans, this protein is Cell division protein FtsB.